The primary structure comprises 319 residues: Pantothenate kinase (319 aa).

Residue 101 to 108 (GSVAVGKS) coordinates ATP.

This sequence belongs to the prokaryotic pantothenate kinase family.

Its subcellular location is the cytoplasm. The enzyme catalyses (R)-pantothenate + ATP = (R)-4'-phosphopantothenate + ADP + H(+). It participates in cofactor biosynthesis; coenzyme A biosynthesis; CoA from (R)-pantothenate: step 1/5. This Clavibacter sepedonicus (Clavibacter michiganensis subsp. sepedonicus) protein is Pantothenate kinase.